The sequence spans 238 residues: Ribonuclease PH (238 aa).

Phosphate is bound by residues Arg86 and Gly124–Arg126.

This sequence belongs to the RNase PH family. Homohexameric ring arranged as a trimer of dimers.

The catalysed reaction is tRNA(n+1) + phosphate = tRNA(n) + a ribonucleoside 5'-diphosphate. Its function is as follows. Phosphorolytic 3'-5' exoribonuclease that plays an important role in tRNA 3'-end maturation. Removes nucleotide residues following the 3'-CCA terminus of tRNAs; can also add nucleotides to the ends of RNA molecules by using nucleoside diphosphates as substrates, but this may not be physiologically important. Probably plays a role in initiation of 16S rRNA degradation (leading to ribosome degradation) during starvation. The protein is Ribonuclease PH of Azorhizobium caulinodans (strain ATCC 43989 / DSM 5975 / JCM 20966 / LMG 6465 / NBRC 14845 / NCIMB 13405 / ORS 571).